We begin with the raw amino-acid sequence, 159 residues long: Phosphopantetheine adenylyltransferase (159 aa).

S9 contributes to the substrate binding site. ATP contacts are provided by residues 9-10 (SF) and H17. The substrate site is built by K41, L74, and K88. ATP is bound by residues 89–91 (GLR), E99, and 123–129 (YLHLSST).

This sequence belongs to the bacterial CoaD family. In terms of assembly, homohexamer. Mg(2+) serves as cofactor.

It localises to the cytoplasm. It catalyses the reaction (R)-4'-phosphopantetheine + ATP + H(+) = 3'-dephospho-CoA + diphosphate. It functions in the pathway cofactor biosynthesis; coenzyme A biosynthesis; CoA from (R)-pantothenate: step 4/5. Functionally, reversibly transfers an adenylyl group from ATP to 4'-phosphopantetheine, yielding dephospho-CoA (dPCoA) and pyrophosphate. The protein is Phosphopantetheine adenylyltransferase of Arthrobacter sp. (strain FB24).